The chain runs to 69 residues: Large ribosomal subunit protein bL32c (69 aa).

The protein belongs to the bacterial ribosomal protein bL32 family.

The protein resides in the plastid. Its subcellular location is the chloroplast. The protein is Large ribosomal subunit protein bL32c (rpl32) of Anthoceros angustus (Hornwort).